Reading from the N-terminus, the 625-residue chain is Coagulation factor XI (625 aa).

The first 18 residues, 1–18 (MTLLYQMVHFALFASVAG), serve as a signal peptide directing secretion. 4 Apple domains span residues 20–103 (CVTT…SKQC), 110–193 (CSKD…LKSC), 200–283 (CIRD…LQHC), and 291–374 (CHSS…LRLC). Cystine bridges form between C20–C103, C46–C76, C50–C56, C110–C193, C136–C165, C140–C146, C200–C283, C226–C255, C230–C236, C291–C374, C317–C346, C321–C327, C380–C500, C416–C432, C514–C581, C545–C560, and C571–C599. 2 N-linked (GlcNAc...) asparagine glycosylation sites follow: N90 and N126. The region spanning 388-623 (IVGGTQSVHG…YVDWILEKTQ (236 aa)) is the Peptidase S1 domain. Residue H431 is the Charge relay system of the active site. N450 carries N-linked (GlcNAc...) asparagine glycosylation. The Charge relay system role is filled by D480. An N-linked (GlcNAc...) asparagine glycan is attached at N491. 547-550 (AGYR) is a heparin binding site. S575 serves as the catalytic Charge relay system.

The protein belongs to the peptidase S1 family. Plasma kallikrein subfamily. Homodimer; disulfide-linked. After activation the heavy and light chains are also linked by a disulfide bond. Interacts (activated) with F9 (inactive and activated) in calcium-dependent manner. Forms a heterodimer with SERPINA5. Post-translationally, activated by factor XIIa (or XII), which cleaves each polypeptide after Arg-387 into the light chain, which contains the active site, and the heavy chain, which associates with high molecular weight (HMW) kininogen. Activated by F12 (activated); the presence of negatively charged surfaces accelerates activation. Activated by F2 (thrombin); the presence of negatively charged surfaces, such as polyphosphate and dextran sulfate, strongly accelerates activation. Autoactivated; the presence of negatively charged surfaces, such as polyphosphate and dextran sulfate, accelerates autoactivation and autolysis. In terms of processing, N-glycosylated on both chains. N-glycosylated sites mainly consist of nonfucosylated sialylated biantennary (in high abundance) and/or triantennary (in low abundance) complex structures.

It localises to the secreted. It catalyses the reaction Selective cleavage of Arg-|-Ala and Arg-|-Val bonds in factor IX to form factor IXa.. Its activity is regulated as follows. Inhibited by SERPINA5. Functionally, factor XI triggers the middle phase of the intrinsic pathway of blood coagulation by activating factor IX. The chain is Coagulation factor XI (F11) from Bos taurus (Bovine).